Consider the following 96-residue polypeptide: Nucleoid-associated protein DR_0199 (96 aa).

The protein belongs to the YbaB/EbfC family. As to quaternary structure, homodimer.

The protein resides in the cytoplasm. It localises to the nucleoid. Binds to DNA and alters its conformation. May be involved in regulation of gene expression, nucleoid organization and DNA protection. This Deinococcus radiodurans (strain ATCC 13939 / DSM 20539 / JCM 16871 / CCUG 27074 / LMG 4051 / NBRC 15346 / NCIMB 9279 / VKM B-1422 / R1) protein is Nucleoid-associated protein DR_0199.